Here is a 566-residue protein sequence, read N- to C-terminus: Putative lipase ATG15 (566 aa).

At 1–17 (MGSKHKKNASKSLRAFS) the chain is on the cytoplasmic side. A helical; Signal-anchor for type II membrane protein transmembrane segment spans residues 18-38 (FIILSASIALVYIFNPVKLIF). Topologically, residues 39–566 (PSSIIRFHHG…CVEWGDEEDA (528 aa)) are lumenal. N-linked (GlcNAc...) asparagine glycosylation is found at asparagine 264 and asparagine 348. The active-site Charge relay system is serine 366. Residue asparagine 483 is glycosylated (N-linked (GlcNAc...) asparagine). The interval 507-545 (DSLDDEPPLPNPLRPGKPSTTSSSQHHTSTTTTTETSRP) is disordered. Over residues 522–543 (GKPSTTSSSQHHTSTTTTTETS) the composition is skewed to low complexity.

This sequence belongs to the AB hydrolase superfamily. Lipase family. Binds to both phosphatidylinositol (PI) and phosphatidylinositol 3,5-bisphosphate (PIP2).

Its subcellular location is the endosome. The protein resides in the multivesicular body membrane. The protein localises to the prevacuolar compartment membrane. The catalysed reaction is a triacylglycerol + H2O = a diacylglycerol + a fatty acid + H(+). In terms of biological role, lipase which is essential for lysis of subvacuolar cytoplasm to vacuole targeted bodies and intravacuolar autophagic bodies. Involved in the lysis of intravacuolar multivesicular body (MVB) vesicles. The intravacuolar membrane disintegration by ATG15 is critical to life span extension. This Meyerozyma guilliermondii (strain ATCC 6260 / CBS 566 / DSM 6381 / JCM 1539 / NBRC 10279 / NRRL Y-324) (Yeast) protein is Putative lipase ATG15 (ATG15).